The primary structure comprises 192 residues: Leucine-rich repeat-containing protein 51 (192 aa).

3 LRR repeats span residues 49-71 (SLTQ…NQVA), 80-101 (NLAW…LTTF), and 103-124 (NLSV…NKLA). The LRRCT domain occupies 137–175 (NPMEEEKGYRQYVLCTLSRITTFDFSGVTKADRTTAEVW).

It is found in the cytoplasm. The polypeptide is Leucine-rich repeat-containing protein 51 (Homo sapiens (Human)).